The primary structure comprises 289 residues: Polyamine aminopropyltransferase (289 aa).

In terms of domain architecture, PABS spans 5–238; it reads TVWHETLHDQ…GIMTFAWATD (234 aa). S-methyl-5'-thioadenosine is bound at residue glutamine 33. Residues histidine 64 and aspartate 88 each coordinate spermidine. Residues glutamate 108 and 140–141 contribute to the S-methyl-5'-thioadenosine site; that span reads DG. Residue aspartate 158 is the Proton acceptor of the active site. Residue 158–161 coordinates spermidine; that stretch reads DCTD. Proline 165 contributes to the S-methyl-5'-thioadenosine binding site.

Belongs to the spermidine/spermine synthase family. As to quaternary structure, homodimer or homotetramer.

It localises to the cytoplasm. It catalyses the reaction S-adenosyl 3-(methylsulfanyl)propylamine + putrescine = S-methyl-5'-thioadenosine + spermidine + H(+). Its pathway is amine and polyamine biosynthesis; spermidine biosynthesis; spermidine from putrescine: step 1/1. In terms of biological role, catalyzes the irreversible transfer of a propylamine group from the amino donor S-adenosylmethioninamine (decarboxy-AdoMet) to putrescine (1,4-diaminobutane) to yield spermidine. The sequence is that of Polyamine aminopropyltransferase from Enterobacter sp. (strain 638).